Reading from the N-terminus, the 422-residue chain is Serine protease HTRA2, mitochondrial (422 aa).

Residues 1–17 constitute a mitochondrion transit peptide; the sequence is MALRGSHRLQVILKRCI. A propeptide spanning residues 18–74 is cleaved from the precursor; that stretch reads ASPLFHSHAPNRRSSQPAIKGGEPNSNGNSGHDQQNGERKGKGWRRLVSFFVPFSLG. The segment at 24 to 56 is disordered; sequence SHAPNRRSSQPAIKGGEPNSNGNSGHDQQNGER. A compositionally biased stretch (polar residues) spans 41–51; sequence PNSNGNSGHDQ. Residues 64–82 form a helical membrane-spanning segment; that stretch reads LVSFFVPFSLGAVVSAAVI. Short sequence motifs (IAP-binding) lie at residues 75–78 and 94–97; these read AVVS and SKMT. The tract at residues 139-302 is serine protease; the sequence is SNGSGFIIEQ…IPIDYVKVFL (164 aa). Active-site charge relay system residues include histidine 157, aspartate 189, and serine 266. The PDZ domain maps to 325 to 410; the sequence is MGITMLTLTP…NLDIVILRGV (86 aa).

Belongs to the peptidase S1C family. As to quaternary structure, interacts with th/DIAP1 (via BIR 2 domain).

Its subcellular location is the mitochondrion intermembrane space. It localises to the mitochondrion membrane. The enzyme catalyses Cleavage of non-polar aliphatic amino-acids at the P1 position, with a preference for Val, Ile and Met. At the P2 and P3 positions, Arg is selected most strongly with a secondary preference for other hydrophilic residues.. Functionally, serine protease that shows proteolytic activity against a non-specific substrate beta-casein. Promotes or induces cell death either by direct binding to and inhibition of BIRC proteins (also called inhibitor of apoptosis proteins, IAPs), leading to an increase in caspase activity, or by a BIRC inhibition-independent, caspase-independent and serine protease activity-dependent mechanism. Can antagonize antiapoptotic activity of th/Diap1 by directly inducing the degradation of th/Diap1. The sequence is that of Serine protease HTRA2, mitochondrial from Drosophila erecta (Fruit fly).